Consider the following 213-residue polypeptide: Redox-sensing transcriptional repressor Rex (213 aa).

A DNA-binding region (H-T-H motif) is located at residues leucine 18 to phenylalanine 57. Position 92–97 (glycine 92–glycine 97) interacts with NAD(+).

Belongs to the transcriptional regulatory Rex family. As to quaternary structure, homodimer.

It is found in the cytoplasm. Its function is as follows. Modulates transcription in response to changes in cellular NADH/NAD(+) redox state. The sequence is that of Redox-sensing transcriptional repressor Rex from Staphylococcus saprophyticus subsp. saprophyticus (strain ATCC 15305 / DSM 20229 / NCIMB 8711 / NCTC 7292 / S-41).